Reading from the N-terminus, the 131-residue chain is Auxin-responsive protein SAUR77 (131 aa).

This sequence belongs to the ARG7 family.

In terms of biological role, may be involved in the regulation of ethylene receptor signaling. Promotes cell expansion and plant growth. The protein is Auxin-responsive protein SAUR77 of Arabidopsis thaliana (Mouse-ear cress).